The primary structure comprises 435 residues: MASAQTGTEMSPHHVTRTYKHENFLSFISTMSEKETVETTQEPKQVVEPTQELEELAIDGDQAAAKKKKSKKKKKKAVSLDKTYADGVFPEGQWMEYPLEVNSYRTTDEEKRYLDRQQNNHWQDFRKGAEVHRRVRQKAQQQIKPGMTMLEIADLIENSIRTYTGNDHTLKQGIGFPTGLSLNHVAAHYTPNSNDKVVLKYEDVMKVDIGVHVNGHIVDSAFTLTFDDKYDNLLTAVREATYTGVKEAGIDVRLNDIGAAVQEVMESYEVELDGKTYPVKCIRNLNGHNIGDYVIHSGKTVPIVANGDMTKMEEGETFAIETFGTTGKGYVIPQGECSHYALNQDIDGVKLPSERAKSLVKSIKDNFGTLPWCRRYLERAGEDKYLLALNQLVRAGVVEDYPPLVDTSGSYTAQYEHTILLHPHKKEVVSKGDDY.

Positions 57 to 77 (AIDGDQAAAKKKKSKKKKKKA) are disordered. The span at 65-77 (AKKKKSKKKKKKA) shows a compositional bias: basic residues. Histidine 188 provides a ligand contact to substrate. Aspartate 208, aspartate 219, and histidine 288 together coordinate a divalent metal cation. Histidine 296 provides a ligand contact to substrate. A divalent metal cation is bound by residues glutamate 321 and glutamate 416.

This sequence belongs to the peptidase M24A family. Methionine aminopeptidase eukaryotic type 2 subfamily. Requires Co(2+) as cofactor. Zn(2+) serves as cofactor. Mn(2+) is required as a cofactor. The cofactor is Fe(2+).

Its subcellular location is the cytoplasm. The catalysed reaction is Release of N-terminal amino acids, preferentially methionine, from peptides and arylamides.. Functionally, cotranslationally removes the N-terminal methionine from nascent proteins. The N-terminal methionine is often cleaved when the second residue in the primary sequence is small and uncharged (Met-Ala-, Cys, Gly, Pro, Ser, Thr, or Val). This Clavispora lusitaniae (strain ATCC 42720) (Yeast) protein is Methionine aminopeptidase 2.